Consider the following 344-residue polypeptide: tRNA N6-adenosine threonylcarbamoyltransferase (344 aa).

Positions 113 and 117 each coordinate Fe cation. Substrate-binding positions include 135-139 (LVSGG), D169, G182, D186, and N278. D306 is a binding site for Fe cation.

This sequence belongs to the KAE1 / TsaD family. It depends on Fe(2+) as a cofactor.

Its subcellular location is the cytoplasm. It catalyses the reaction L-threonylcarbamoyladenylate + adenosine(37) in tRNA = N(6)-L-threonylcarbamoyladenosine(37) in tRNA + AMP + H(+). In terms of biological role, required for the formation of a threonylcarbamoyl group on adenosine at position 37 (t(6)A37) in tRNAs that read codons beginning with adenine. Is involved in the transfer of the threonylcarbamoyl moiety of threonylcarbamoyl-AMP (TC-AMP) to the N6 group of A37, together with TsaE and TsaB. TsaD likely plays a direct catalytic role in this reaction. The chain is tRNA N6-adenosine threonylcarbamoyltransferase from Corynebacterium efficiens (strain DSM 44549 / YS-314 / AJ 12310 / JCM 11189 / NBRC 100395).